The following is a 279-amino-acid chain: Protein phosphatase 1 regulatory subunit 3E (279 aa).

A phosphoserine mark is found at S16 and S33. The segment at R28–R87 is disordered. Positions A51–R65 are enriched in basic residues. S66 is modified (phosphoserine). The short motif at R87 to F90 is the PP1-binding motif element. Residues A154–L259 form the CBM21 domain. A glycogen-binding motif region spans residues G176–W198. Residues W248 to Y256 form a substrate-binding motif region.

Its function is as follows. Acts as a glycogen-targeting subunit for PP1. PP1 is involved in glycogen metabolism and contributes to the activation of glycogen synthase leading to an increase in glycogen synthesis. The chain is Protein phosphatase 1 regulatory subunit 3E (Ppp1r3e) from Mus musculus (Mouse).